Consider the following 195-residue polypeptide: Peptidyl-tRNA hydrolase (195 aa).

Residue Tyr-17 coordinates tRNA. Residue His-22 is the Proton acceptor of the active site. 3 residues coordinate tRNA: Tyr-68, Asn-70, and Asn-116.

Belongs to the PTH family. As to quaternary structure, monomer.

It is found in the cytoplasm. It carries out the reaction an N-acyl-L-alpha-aminoacyl-tRNA + H2O = an N-acyl-L-amino acid + a tRNA + H(+). Functionally, hydrolyzes ribosome-free peptidyl-tRNAs (with 1 or more amino acids incorporated), which drop off the ribosome during protein synthesis, or as a result of ribosome stalling. Catalyzes the release of premature peptidyl moieties from peptidyl-tRNA molecules trapped in stalled 50S ribosomal subunits, and thus maintains levels of free tRNAs and 50S ribosomes. This is Peptidyl-tRNA hydrolase from Shewanella putrefaciens (strain CN-32 / ATCC BAA-453).